The following is a 293-amino-acid chain: ATP phosphoribosyltransferase (293 aa).

This sequence belongs to the ATP phosphoribosyltransferase family. Long subfamily. Mg(2+) serves as cofactor.

The protein resides in the cytoplasm. The enzyme catalyses 1-(5-phospho-beta-D-ribosyl)-ATP + diphosphate = 5-phospho-alpha-D-ribose 1-diphosphate + ATP. It functions in the pathway amino-acid biosynthesis; L-histidine biosynthesis; L-histidine from 5-phospho-alpha-D-ribose 1-diphosphate: step 1/9. Feedback inhibited by histidine. In terms of biological role, catalyzes the condensation of ATP and 5-phosphoribose 1-diphosphate to form N'-(5'-phosphoribosyl)-ATP (PR-ATP). Has a crucial role in the pathway because the rate of histidine biosynthesis seems to be controlled primarily by regulation of HisG enzymatic activity. This is ATP phosphoribosyltransferase from Solidesulfovibrio magneticus (strain ATCC 700980 / DSM 13731 / RS-1) (Desulfovibrio magneticus).